The following is a 261-amino-acid chain: Maspardin (261 aa).

The region spanning 87–159 is the AB hydrolase-1 domain; the sequence is FCDGFRKLLD…NSFWLMPAFM (73 aa). At serine 257 the chain carries Phosphoserine.

Belongs to the AB hydrolase superfamily. In terms of assembly, interacts with CD4. Interacts with ALDH16A1.

It is found in the cytoplasm. May play a role as a negative regulatory factor in CD4-dependent T-cell activation. This chain is Maspardin (Spg21), found in Rattus norvegicus (Rat).